A 133-amino-acid chain; its full sequence is Transcription antitermination protein NusB (133 aa).

This sequence belongs to the NusB family.

Involved in transcription antitermination. Required for transcription of ribosomal RNA (rRNA) genes. Binds specifically to the boxA antiterminator sequence of the ribosomal RNA (rrn) operons. The chain is Transcription antitermination protein NusB from Clostridium novyi (strain NT).